Consider the following 779-residue polypeptide: Transcriptional regulator QRICH1 (779 aa).

At M1 the chain carries N-acetylmethionine. Residues 6-48 enclose the CARD domain; the sequence is ENTISFEEYIRVKARSVPQHRMKEFLDSLASKGPEALQEFQQT. Disordered stretches follow at residues 141-163 and 219-242; these read QGQA…PSPS and ALSP…TASV. At S346 the chain carries Phosphoserine. Glycyl lysine isopeptide (Lys-Gly) (interchain with G-Cter in SUMO2) cross-links involve residues K354 and K359. Residues 420-430 are compositionally biased toward low complexity; sequence QQQPQQQTPQE. The segment at 420–443 is disordered; it reads QQQPQQQTPQEQTPPPPQQQQQQQ. At S467 the chain carries Phosphoserine.

It is found in the nucleus. Its subcellular location is the cytoplasm. The protein resides in the cell membrane. Transcriptional regulator that acts as a mediator of the integrated stress response (ISR) through transcriptional control of protein homeostasis under conditions of ER stress. Controls the outcome of the unfolded protein response (UPR), an ER-stress response pathway that either promotes recovery of ER homeostasis and cell survival, or triggers the terminal UPR which elicits programmed cell death when ER stress is prolonged and unresolved. ER stress induces QRICH1 translation by a ribosome translation re-initiation mechanism in response to EIF2S1/eIF-2-alpha phosphorylation, and stress-induced QRICH1 regulates a transcriptional program associated with protein translation, protein secretion-mediated proteotoxicity and cell death during the terminal UPR. May cooperate with ATF4 transcription factor signaling to regulate ER homeostasis which is critical for cell viability. Up-regulates CASP3/caspase-3 activity in epithelial cells under ER stress. Central regulator of proteotoxicity associated with ER stress-mediated inflammatory diseases in the intestines and liver. Involved in chondrocyte hypertrophy, a process required for normal longitudinal bone growth. The protein is Transcriptional regulator QRICH1 (QRICH1) of Bos taurus (Bovine).